Reading from the N-terminus, the 244-residue chain is Ribosomal RNA large subunit methyltransferase E (244 aa).

5 residues coordinate S-adenosyl-L-methionine: Gly81, Trp83, Asp109, Asp125, and Asp149. Residue Lys189 is the Proton acceptor of the active site.

The protein belongs to the class I-like SAM-binding methyltransferase superfamily. RNA methyltransferase RlmE family.

Its subcellular location is the cytoplasm. The enzyme catalyses uridine(2552) in 23S rRNA + S-adenosyl-L-methionine = 2'-O-methyluridine(2552) in 23S rRNA + S-adenosyl-L-homocysteine + H(+). Functionally, specifically methylates the uridine in position 2552 of 23S rRNA at the 2'-O position of the ribose in the fully assembled 50S ribosomal subunit. In Cereibacter sphaeroides (strain ATCC 17023 / DSM 158 / JCM 6121 / CCUG 31486 / LMG 2827 / NBRC 12203 / NCIMB 8253 / ATH 2.4.1.) (Rhodobacter sphaeroides), this protein is Ribosomal RNA large subunit methyltransferase E.